Consider the following 121-residue polypeptide: Large ribosomal subunit protein uL22 (121 aa).

It belongs to the universal ribosomal protein uL22 family. In terms of assembly, part of the 50S ribosomal subunit.

In terms of biological role, this protein binds specifically to 23S rRNA; its binding is stimulated by other ribosomal proteins, e.g. L4, L17, and L20. It is important during the early stages of 50S assembly. It makes multiple contacts with different domains of the 23S rRNA in the assembled 50S subunit and ribosome. Functionally, the globular domain of the protein is located near the polypeptide exit tunnel on the outside of the subunit, while an extended beta-hairpin is found that lines the wall of the exit tunnel in the center of the 70S ribosome. In Beutenbergia cavernae (strain ATCC BAA-8 / DSM 12333 / CCUG 43141 / JCM 11478 / NBRC 16432 / NCIMB 13614 / HKI 0122), this protein is Large ribosomal subunit protein uL22.